Consider the following 238-residue polypeptide: Sugar fermentation stimulation protein homolog (238 aa).

Belongs to the SfsA family.

The chain is Sugar fermentation stimulation protein homolog from Haemophilus influenzae (strain 86-028NP).